The following is a 274-amino-acid chain: Rhamnulose-1-phosphate aldolase (274 aa).

Glutamate 117 is a catalytic residue. Zn(2+) contacts are provided by histidine 141, histidine 143, and histidine 212.

This sequence belongs to the aldolase class II family. RhaD subfamily. In terms of assembly, homotetramer. The cofactor is Zn(2+).

Its subcellular location is the cytoplasm. The enzyme catalyses L-rhamnulose 1-phosphate = (S)-lactaldehyde + dihydroxyacetone phosphate. The protein operates within carbohydrate degradation; L-rhamnose degradation; glycerone phosphate from L-rhamnose: step 3/3. Functionally, catalyzes the reversible cleavage of L-rhamnulose-1-phosphate to dihydroxyacetone phosphate (DHAP) and L-lactaldehyde. The chain is Rhamnulose-1-phosphate aldolase from Escherichia coli O45:K1 (strain S88 / ExPEC).